The following is a 172-amino-acid chain: B-box zinc finger protein 18 (172 aa).

Residues Cys-5, Cys-8, Cys-28, His-33, Cys-56, Cys-59, Cys-79, and His-84 each coordinate Zn(2+). Residues Cys-5–Leu-47 form a B box-type 1; atypical zinc finger. The B box-type 2; atypical zinc-finger motif lies at Cys-56–Leu-96. The disordered stretch occupies residues Gln-119–Glu-172. The span at Lys-120–Asn-132 shows a compositional bias: polar residues. The segment covering Arg-148–Glu-158 has biased composition (basic and acidic residues).

Expressed in vasculature of leaves and petioles.

Its subcellular location is the nucleus. Acts as a negative regulator of seedling photomorphogenesis. Acts as a negative regulator of blue light-mediated inhibition of hypocotyl elongation through increase of bioactive gibberellin levels. Acts as a repressor of thermotolerance by modulating expression of a set of heat shock-responsive genes. The sequence is that of B-box zinc finger protein 18 from Arabidopsis thaliana (Mouse-ear cress).